Consider the following 66-residue polypeptide: Small vasohibin-binding protein (66 aa).

The span at 1–23 (MDPPARKEKPKVKEPVSRIEKAK) shows a compositional bias: basic and acidic residues. Positions 1–32 (MDPPARKEKPKVKEPVSRIEKAKQKSAQQELK) are disordered. The stretch at 5 to 52 (ARKEKPKVKEPVSRIEKAKQKSAQQELKQRQRAEIYALNRVMTELEQQ) forms a coiled coil.

The protein belongs to the SVBP family. In terms of assembly, interacts with VASH1 and VASH2.

Its subcellular location is the cytoplasm. The protein resides in the secreted. It localises to the cytoskeleton. Functionally, enhances the tyrosine carboxypeptidase activity of VASH1 and VASH2, thereby promoting the removal of the C-terminal tyrosine residue of alpha-tubulin. Also required to enhance the solubility and secretion of VASH1 and VASH2. Plays a role in axon and excitatory synapse formation. The protein is Small vasohibin-binding protein of Bos taurus (Bovine).